We begin with the raw amino-acid sequence, 896 residues long: Protein translocase subunit SecA (896 aa).

ATP contacts are provided by residues glutamine 87, 105–109, and aspartate 512; that span reads GEGKT. The interval 867–889 is disordered; it reads QEPARSNRVAGRNDPCPCGSGKK. Zn(2+) is bound by residues cysteine 882, cysteine 884, cysteine 893, and cysteine 894.

Belongs to the SecA family. In terms of assembly, monomer and homodimer. Part of the essential Sec protein translocation apparatus which comprises SecA, SecYEG and auxiliary proteins SecDF-YajC and YidC. It depends on Zn(2+) as a cofactor.

The protein resides in the cell inner membrane. It localises to the cytoplasm. It catalyses the reaction ATP + H2O + cellular proteinSide 1 = ADP + phosphate + cellular proteinSide 2.. Functionally, part of the Sec protein translocase complex. Interacts with the SecYEG preprotein conducting channel. Has a central role in coupling the hydrolysis of ATP to the transfer of proteins into and across the cell membrane, serving as an ATP-driven molecular motor driving the stepwise translocation of polypeptide chains across the membrane. The protein is Protein translocase subunit SecA of Pelobacter propionicus (strain DSM 2379 / NBRC 103807 / OttBd1).